Here is a 389-residue protein sequence, read N- to C-terminus: Chalcone synthase 1A (389 aa).

C164 is a catalytic residue.

This sequence belongs to the thiolase-like superfamily. Chalcone/stilbene synthases family.

The enzyme catalyses (E)-4-coumaroyl-CoA + 3 malonyl-CoA + 3 H(+) = 2',4,4',6'-tetrahydroxychalcone + 3 CO2 + 4 CoA. The protein operates within secondary metabolite biosynthesis; flavonoid biosynthesis. In terms of biological role, the primary product of this enzyme is 4,2',4',6'-tetrahydroxychalcone (also termed naringenin-chalcone or chalcone) which can under specific conditions spontaneously isomerize into naringenin. The chain is Chalcone synthase 1A (CHS1A) from Solanum tuberosum (Potato).